Consider the following 353-residue polypeptide: MSERQKALDTVIKNMEKSFGKGAVMKLGDRTDRNVSTVSSGSITLDSALGVGGYPKGRIIEIYGPESSGKTTVALHAIAEVQRQGGVAAFIDAEHALDPVYAKNLGVDIENLYLSQPDHGEQGLEIAEAFVRSGAVDIIVVDSVAALTPKAEIEGEMGDSHMGLQARLMSQALRKLSGSVSKSNTIAIFINQVREKIGVMFGNPETTPGGRALKFYSSVRLEVRRAEQLKQGQEIVGNRTKIKVVKNKVAPPFKVAEVDIMYGKGISREGEIVDLGAEYEVLQKSGAWYSYDGERIGQGRENIKTYLKENPEVRDEIDQKIRKAMGVGASLEEASAQKEEVPVEDKLFDDELE.

Residue 64 to 71 (GPESSGKT) participates in ATP binding. Residues 331–353 (LEEASAQKEEVPVEDKLFDDELE) form a disordered region. The span at 335-346 (SAQKEEVPVEDK) shows a compositional bias: basic and acidic residues.

The protein belongs to the RecA family.

It is found in the cytoplasm. Functionally, can catalyze the hydrolysis of ATP in the presence of single-stranded DNA, the ATP-dependent uptake of single-stranded DNA by duplex DNA, and the ATP-dependent hybridization of homologous single-stranded DNAs. It interacts with LexA causing its activation and leading to its autocatalytic cleavage. The sequence is that of Protein RecA from Macrococcus caseolyticus (strain JCSC5402) (Macrococcoides caseolyticum).